The primary structure comprises 297 residues: Aspartate dehydrogenase domain-containing protein (297 aa).

Phosphoserine occurs at positions 24 and 172.

The protein belongs to the L-aspartate dehydrogenase family.

The chain is Aspartate dehydrogenase domain-containing protein from Rattus norvegicus (Rat).